A 236-amino-acid polypeptide reads, in one-letter code: 7-cyano-7-deazaguanine synthase (236 aa).

Residue 7 to 17 (CSGGLDSVSLA) participates in ATP binding. Residues cysteine 185, cysteine 193, cysteine 196, and cysteine 199 each coordinate Zn(2+).

It belongs to the QueC family. Zn(2+) is required as a cofactor.

The catalysed reaction is 7-carboxy-7-deazaguanine + NH4(+) + ATP = 7-cyano-7-deazaguanine + ADP + phosphate + H2O + H(+). It functions in the pathway purine metabolism; 7-cyano-7-deazaguanine biosynthesis. Functionally, catalyzes the ATP-dependent conversion of 7-carboxy-7-deazaguanine (CDG) to 7-cyano-7-deazaguanine (preQ(0)). The polypeptide is 7-cyano-7-deazaguanine synthase (Sinorhizobium fredii (strain NBRC 101917 / NGR234)).